The chain runs to 121 residues: uncharacterized protein (121 aa).

Disordered stretches follow at residues 1–41 and 94–121; these read MRRQ…QESR and GGTI…GLRR. Over residues 98–108 the composition is skewed to polar residues; that stretch reads SGQQSRNSSLP.

In terms of tissue distribution, predominantly expressed in tissues containing motile cilia. Also expressed in non-motile ciliated adult olfactory bulbs.

The protein resides in the cytoplasm. The protein localises to the cytoskeleton. It is found in the cilium basal body. This is an uncharacterized protein from Mus musculus (Mouse).